The following is an 891-amino-acid chain: DNA mismatch repair protein MutS (891 aa).

639-646 (GPNMAGKS) is an ATP binding site. The interval 827–854 (TIQEARPSAQGSEEKTPSSPAEKGLSLF) is disordered.

This sequence belongs to the DNA mismatch repair MutS family.

In terms of biological role, this protein is involved in the repair of mismatches in DNA. It is possible that it carries out the mismatch recognition step. This protein has a weak ATPase activity. This is DNA mismatch repair protein MutS from Treponema denticola (strain ATCC 35405 / DSM 14222 / CIP 103919 / JCM 8153 / KCTC 15104).